The sequence spans 403 residues: 3-hydroxy-3-methylglutaryl-coenzyme A reductase (403 aa).

Residues E99 and D303 each act as charge relay system in the active site. H398 (proton donor) is an active-site residue.

The protein belongs to the HMG-CoA reductase family.

It carries out the reaction (R)-mevalonate + 2 NADP(+) + CoA = (3S)-3-hydroxy-3-methylglutaryl-CoA + 2 NADPH + 2 H(+). It participates in metabolic intermediate biosynthesis; (R)-mevalonate biosynthesis; (R)-mevalonate from acetyl-CoA: step 3/3. Its activity is regulated as follows. Is competitively inhibited by (R)-HMG-CoA and lovastatin (formerly called mevinolin). Its function is as follows. Catalyzes the NADPH-dependent reductive deacylation of (S)-3-hydroxy-3-methylglutaryl-CoA (HMG-CoA) to (R)-mevalonate. Functions in the mevalonate (MVA) pathway leading to isopentenyl diphosphate (IPP), a key precursor for the biosynthesis of isoprenoid compounds such as archaeal membrane lipids. Is also able to catalyze the reduction of mevaldehyde to mevalonate and the oxidative acylation of mevaldehyde to HMG-CoA. The protein is 3-hydroxy-3-methylglutaryl-coenzyme A reductase (hmgA) of Haloferax volcanii (strain ATCC 29605 / DSM 3757 / JCM 8879 / NBRC 14742 / NCIMB 2012 / VKM B-1768 / DS2) (Halobacterium volcanii).